Reading from the N-terminus, the 493-residue chain is Glutamate--tRNA ligase (493 aa).

A 'HIGH' region motif is present at residues 10–20 (PSPTGTPHVGL). The 'KMSKS' region signature appears at 254–258 (KLSKR). Lysine 257 provides a ligand contact to ATP.

This sequence belongs to the class-I aminoacyl-tRNA synthetase family. Glutamate--tRNA ligase type 1 subfamily. As to quaternary structure, monomer.

It localises to the cytoplasm. It carries out the reaction tRNA(Glu) + L-glutamate + ATP = L-glutamyl-tRNA(Glu) + AMP + diphosphate. Its function is as follows. Catalyzes the attachment of glutamate to tRNA(Glu) in a two-step reaction: glutamate is first activated by ATP to form Glu-AMP and then transferred to the acceptor end of tRNA(Glu). This Corynebacterium glutamicum (strain ATCC 13032 / DSM 20300 / JCM 1318 / BCRC 11384 / CCUG 27702 / LMG 3730 / NBRC 12168 / NCIMB 10025 / NRRL B-2784 / 534) protein is Glutamate--tRNA ligase.